The sequence spans 340 residues: Entry-fusion complex protein OPG094 (340 aa).

Residues 1-20 form a disordered region; that stretch reads MGGGVSVELPKRDPPPGVPT. The N-myristoyl glycine; by host moiety is linked to residue G2. Over 2 to 319 the chain is Virion surface; sequence GGGVSVELPK…VQHNIKHSFD (318 aa). A helical; Signal-anchor for type II membrane protein membrane pass occupies residues 320 to 340; the sequence is LKLHLISLLSLLVIWILIVAI.

It belongs to the orthopoxvirus OPG086 family. As to quaternary structure, interacts with OPG143. Component of the entry fusion complex (EFC) composed of OPG053, OPG076, OPG086, OPG094, OPG095, OPG099, OPG107, OPG143, OPG104, OPG147 and OPG155. Except for OPG095 and OPG053, each of the EFC proteins is required for assembly or stability of the complex. Unglycosylated because produced in viral factories instead of the classic ER -Golgi route.

It localises to the virion membrane. Functionally, component of the entry fusion complex (EFC), which consists of 11 proteins. During cell infection, this complex mediates entry of the virion core into the host cytoplasm by a two-step mechanism consisting of lipid mixing of the viral and cellular membranes and subsequent pore formation. In Homo sapiens (Human), this protein is Entry-fusion complex protein OPG094 (OPG094).